The chain runs to 428 residues: Dihydroorotase (428 aa).

H59 and H61 together coordinate Zn(2+). Residues 61–63 (HLR) and N93 each bind substrate. Zn(2+) is bound by residues D151, H178, and H231. N277 contributes to the substrate binding site. Residue D304 participates in Zn(2+) binding. D304 is a catalytic residue. Substrate is bound by residues H308 and 322–323 (FG).

Belongs to the metallo-dependent hydrolases superfamily. DHOase family. Class I DHOase subfamily. The cofactor is Zn(2+).

The enzyme catalyses (S)-dihydroorotate + H2O = N-carbamoyl-L-aspartate + H(+). It functions in the pathway pyrimidine metabolism; UMP biosynthesis via de novo pathway; (S)-dihydroorotate from bicarbonate: step 3/3. In terms of biological role, catalyzes the reversible cyclization of carbamoyl aspartate to dihydroorotate. The polypeptide is Dihydroorotase (Bacillus cereus (strain ZK / E33L)).